Reading from the N-terminus, the 307-residue chain is Fructokinase (307 aa).

This sequence belongs to the carbohydrate kinase PfkB family.

The enzyme catalyses D-fructose + ATP = D-fructose 6-phosphate + ADP + H(+). This chain is Fructokinase (scrK), found in Salmonella typhimurium.